A 123-amino-acid chain; its full sequence is Large ribosomal subunit protein uL29 (123 aa).

The protein belongs to the universal ribosomal protein uL29 family.

In Babesia bovis, this protein is Large ribosomal subunit protein uL29 (RPL35).